We begin with the raw amino-acid sequence, 813 residues long: Sodium/hydrogen exchanger 2 (813 aa).

7 consecutive transmembrane segments (helical) span residues 108–128, 139–159, 170–190, 210–230, 238–258, 279–299, and 309–329; these read IVPE…IIFG, TDVF…YFMP, IFWY…LSLF, LFGS…FENI, ILVF…YNLF, FFVV…IAAF, and VIEP…AEMF. Asn-351 carries N-linked (GlcNAc...) asparagine glycosylation. Transmembrane regions (helical) follow at residues 362-382, 393-413, 431-451, and 460-480; these read YFMK…MGVS, AFVC…VFVL, FIIA…FLLP, and LFIT…GITI. Positions 649-661 are enriched in basic and acidic residues; it reads LRKDNSLNRERRA. Disordered regions lie at residues 649 to 709 and 736 to 813; these read LRKD…NLQP and DVGS…NEKP. Polar residues predominate over residues 687 to 696; that stretch reads VSNADGNSSD. 2 stretches are compositionally biased toward basic and acidic residues: residues 770–781 and 797–813; these read KDQRFGRGREDS and RASE…NEKP.

This sequence belongs to the monovalent cation:proton antiporter 1 (CPA1) transporter (TC 2.A.36) family. In terms of assembly, interacts with CHP1 and CHP2. Predominantly in small intestine, colon, and stomach, with much lower levels in skeletal muscle, kidney, brain, testis, uterus, heart and lung.

The protein localises to the apical cell membrane. It catalyses the reaction Na(+)(in) + H(+)(out) = Na(+)(out) + H(+)(in). Its activity is regulated as follows. Li(+) activates Na(+)/H(+) exchanger. Functionally, plasma membrane Na(+)/H(+) antiporter. Mediates the electroneutral exchange of intracellular H(+) ions for extracellular Na(+). Major apical Na(+)/H(+) exchanger in the base of the colonic crypt. Controls in the colonic crypt intracellular pH (pHi) to direct colonic epithelial cell differentiation into the absorptive enterocyte lineage at the expense of the secretory lineage. This Rattus norvegicus (Rat) protein is Sodium/hydrogen exchanger 2 (Slc9a2).